Reading from the N-terminus, the 491-residue chain is Ketol-acid reductoisomerase (NADP(+)) (491 aa).

A KARI N-terminal Rossmann domain is found at 15–208; it reads AQLGKCRFMG…GGHRAGVLES (194 aa). Residues 45 to 48, R68, R76, S78, and 108 to 110 contribute to the NADP(+) site; these read CGAQ and DKQ. The active site involves H132. G158 provides a ligand contact to NADP(+). 2 consecutive KARI C-terminal knotted domains span residues 209 to 344 and 345 to 484; these read SFVA…TAPQ and YEGK…MTDM. Residues D217, E221, E389, and E393 each contribute to the Mg(2+) site. S414 is a binding site for substrate.

Belongs to the ketol-acid reductoisomerase family. The cofactor is Mg(2+).

It catalyses the reaction (2R)-2,3-dihydroxy-3-methylbutanoate + NADP(+) = (2S)-2-acetolactate + NADPH + H(+). The catalysed reaction is (2R,3R)-2,3-dihydroxy-3-methylpentanoate + NADP(+) = (S)-2-ethyl-2-hydroxy-3-oxobutanoate + NADPH + H(+). It participates in amino-acid biosynthesis; L-isoleucine biosynthesis; L-isoleucine from 2-oxobutanoate: step 2/4. The protein operates within amino-acid biosynthesis; L-valine biosynthesis; L-valine from pyruvate: step 2/4. In terms of biological role, involved in the biosynthesis of branched-chain amino acids (BCAA). Catalyzes an alkyl-migration followed by a ketol-acid reduction of (S)-2-acetolactate (S2AL) to yield (R)-2,3-dihydroxy-isovalerate. In the isomerase reaction, S2AL is rearranged via a Mg-dependent methyl migration to produce 3-hydroxy-3-methyl-2-ketobutyrate (HMKB). In the reductase reaction, this 2-ketoacid undergoes a metal-dependent reduction by NADPH to yield (R)-2,3-dihydroxy-isovalerate. This is Ketol-acid reductoisomerase (NADP(+)) from Salmonella arizonae (strain ATCC BAA-731 / CDC346-86 / RSK2980).